A 155-amino-acid chain; its full sequence is Nucleosome assembly protein 1-like 5 (155 aa).

A compositionally biased stretch (basic and acidic residues) spans 1-16; it reads MADPEKQGPAESRAED. A disordered region spans residues 1-60; the sequence is MADPEKQGPAESRAEDEVMEGAQGGEDAATGDSATAPAAEEPQAPAENAPKPKNDFIESL. The segment covering 27–49 has biased composition (low complexity); it reads DAATGDSATAPAAEEPQAPAENA. A coiled-coil region spans residues 68–94; the sequence is VLALKKLQKRCDKIEAKFDKEFQALEK. Residues 119-155 form a disordered region; it reads WTLEGEDDEDDEEEEDEEEEEEEAAAGATGGPDSAEK. Positions 122–142 are enriched in acidic residues; the sequence is EGEDDEDDEEEEDEEEEEEEA.

The protein belongs to the nucleosome assembly protein (NAP) family.

The protein resides in the nucleus. This chain is Nucleosome assembly protein 1-like 5 (Nap1l5), found in Rattus norvegicus (Rat).